Here is a 259-residue protein sequence, read N- to C-terminus: 3'-5' ssDNA/RNA exonuclease TatD (259 aa).

The a divalent metal cation site is built by Glu-92, His-128, and His-153.

The protein belongs to the metallo-dependent hydrolases superfamily. TatD-type hydrolase family. TatD subfamily. Monomer. The cofactor is Mg(2+).

It is found in the cytoplasm. In terms of biological role, 3'-5' exonuclease that prefers single-stranded DNA and RNA. May play a role in the H(2)O(2)-induced DNA damage repair. The chain is 3'-5' ssDNA/RNA exonuclease TatD from Erwinia tasmaniensis (strain DSM 17950 / CFBP 7177 / CIP 109463 / NCPPB 4357 / Et1/99).